A 1126-amino-acid polypeptide reads, in one-letter code: DNA-directed RNA polymerase subunit Rpo2 (1126 aa).

Cys-1060, Cys-1063, Cys-1078, and His-1081 together coordinate Zn(2+).

The protein belongs to the RNA polymerase beta chain family. In terms of assembly, part of the 13-subunit RNA polymerase complex. Interacts with TFS4. As to quaternary structure, (Microbial infection) Binds viral protein RIP which blocks global transcription. Zn(2+) serves as cofactor.

The protein localises to the cytoplasm. It carries out the reaction RNA(n) + a ribonucleoside 5'-triphosphate = RNA(n+1) + diphosphate. In terms of biological role, DNA-dependent RNA polymerase (RNAP) catalyzes the transcription of DNA into RNA using the four ribonucleoside triphosphates as substrates. This subunit is involved in DNA promoter recognition. In Sulfolobus acidocaldarius (strain ATCC 33909 / DSM 639 / JCM 8929 / NBRC 15157 / NCIMB 11770), this protein is DNA-directed RNA polymerase subunit Rpo2.